Here is a 333-residue protein sequence, read N- to C-terminus: Phosphoribosylformylglycinamidine cyclo-ligase (333 aa).

This sequence belongs to the AIR synthase family.

It is found in the cytoplasm. It carries out the reaction 2-formamido-N(1)-(5-O-phospho-beta-D-ribosyl)acetamidine + ATP = 5-amino-1-(5-phospho-beta-D-ribosyl)imidazole + ADP + phosphate + H(+). It functions in the pathway purine metabolism; IMP biosynthesis via de novo pathway; 5-amino-1-(5-phospho-D-ribosyl)imidazole from N(2)-formyl-N(1)-(5-phospho-D-ribosyl)glycinamide: step 2/2. This Methanococcoides burtonii (strain DSM 6242 / NBRC 107633 / OCM 468 / ACE-M) protein is Phosphoribosylformylglycinamidine cyclo-ligase.